The following is a 138-amino-acid chain: Protein SPMIP3 (138 aa).

This is Protein SPMIP3 (SPMIP3) from Bos taurus (Bovine).